Here is a 715-residue protein sequence, read N- to C-terminus: Transcription activator of gluconeogenesis MGYG_02011 (715 aa).

The span at 1 to 14 shows a compositional bias: polar residues; the sequence is MSPHQTTGQESDNM. Residues 1-28 are disordered; it reads MSPHQTTGQESDNMAVNGENAPASSQYI. A DNA-binding region (zn(2)-C6 fungal-type) is located at residues 66 to 94; that stretch reads CYACQRGHLTCGDERPCQRCIKRGFQDAC. 4 stretches are compositionally biased toward polar residues: residues 129-166, 179-191, 203-223, and 362-385; these read QNNVNGSNTSPGVPQQMTSPNFYSTQQSPDYNSFPQNK, YASQSPVSPTYQI, SLPQSASETPSTANAAPGQFN, and MMTTNSATFEDTTNSGAFSSRPNA. Disordered stretches follow at residues 129-223, 354-414, 534-569, and 628-663; these read QNNV…GQFN, SPAS…RRRH, NHNVNTGGSSGLVTDSTSRGSYTPRPYSSDVYNSST, and GSNGEADAGQNGEASSSEANELNGSNANGATTNGRG. Over residues 386 to 400 the composition is skewed to low complexity; the sequence is SVSQQRQQPVVSTPQ. Composition is skewed to polar residues over residues 535 to 554 and 639 to 649; these read HNVNTGGSSGLVTDSTSRGS and GEASSSEANEL. Low complexity predominate over residues 650–662; sequence NGSNANGATTNGR.

The protein belongs to the ERT1/acuK family.

It is found in the nucleus. Transcription factor which regulates nonfermentable carbon utilization. Activator of gluconeogenetic genes. The chain is Transcription activator of gluconeogenesis MGYG_02011 from Arthroderma gypseum (strain ATCC MYA-4604 / CBS 118893) (Microsporum gypseum).